Consider the following 312-residue polypeptide: Salivary protein SG34 (312 aa).

A signal peptide spans 1 to 20; the sequence is MSPSKKILVLLLFPILLVSS. A coiled-coil region spans residues 95–158; it reads NMEVQLLRES…QEEIEEQTKQ (64 aa).

This sequence belongs to the salivary protein SG34 family. Female salivary gland (at protein level). Low-level expression in ovary.

Possible serine protease. In terms of biological role, (Microbial infection) Modulates replication of duck Tembusu virus in salivary glands and virus release into the saliva, probably via the regulation of antimicrobial peptides expression in response to virus infection. Functionally, (Microbial infection) Enhances replication of dengue virus type 2 in human keratinocytes, probably by suppressing the production of type I interferons and antimicrobial peptides in response to virus infection. The sequence is that of Salivary protein SG34 from Aedes aegypti (Yellowfever mosquito).